Here is a 737-residue protein sequence, read N- to C-terminus: tRNA (guanine(27)-N(2))-dimethyltransferase (737 aa).

The span at 1-10 (MENMAEEELL) shows a compositional bias: acidic residues. Residues 1–65 (MENMAEEELL…ASAPVPAPAL (65 aa)) are disordered. The segment covering 17–49 (VVQVPVPTPTPDSARVPAPAPDSAPVSASTPAP) has biased composition (low complexity). Thr-24 is modified (phosphothreonine). Over residues 50-62 (ASAPTPASAPVPA) the composition is skewed to pro residues. Phosphoserine is present on Ser-72. The Nucleolar localization signal signature appears at 141 to 145 (HKLHR). The C2H2-type zinc finger occupies 190–212 (YHCIICSATITRRTDMLGHVRRH). One can recognise a Trm1 methyltransferase domain in the interval 233–692 (EILKEADTDV…APLMQFKSIL (460 aa)). Residues Arg-266, Asp-313, Asp-363, and Ala-364 each coordinate S-adenosyl-L-methionine. 4 residues coordinate Zn(2+): Cys-494, Cys-497, Cys-519, and Cys-521. Lys-589 is covalently cross-linked (Glycyl lysine isopeptide (Lys-Gly) (interchain with G-Cter in SUMO2)). Ser-616 carries the phosphoserine modification.

Belongs to the class I-like SAM-binding methyltransferase superfamily. Trm1 family.

The protein localises to the nucleus. It is found in the nucleolus. The enzyme catalyses guanosine(27) in tRNA(Tyr) + 2 S-adenosyl-L-methionine = N(2)-dimethylguanosine(27) in tRNA(Tyr) + 2 S-adenosyl-L-homocysteine + 2 H(+). Functionally, specifically dimethylates a single guanine residue at position 27 of tRNA(Tyr) using S-adenosyl-L-methionine as donor of the methyl groups. Dimethylation at position 27 of tRNA(Tyr) is required for efficient translation of tyrosine codons. Also required to maintain 3-(3-amino-3-carboxypropyl)uridine (acp3U) in the D-loop of several cytoplasmic tRNAs. This is tRNA (guanine(27)-N(2))-dimethyltransferase (TRMT1L) from Bos taurus (Bovine).